The primary structure comprises 231 residues: Acyl-protein thioesterase 2 (231 aa).

A lipid anchor (S-palmitoyl cysteine) is attached at Cys-2. Ser-82 is modified (phosphoserine). Catalysis depends on charge relay system residues Ser-122, Asp-176, and His-210.

It belongs to the AB hydrolase superfamily. AB hydrolase 2 family. In terms of tissue distribution, expressed in various breast cancer cell lines.

It is found in the cytoplasm. It catalyses the reaction S-hexadecanoyl-L-cysteinyl-[protein] + H2O = L-cysteinyl-[protein] + hexadecanoate + H(+). The catalysed reaction is prostaglandin E2 1-glyceryl ester + H2O = prostaglandin E2 + glycerol + H(+). The enzyme catalyses 1-hexadecanoyl-sn-glycero-3-phosphocholine + H2O = sn-glycerol 3-phosphocholine + hexadecanoate + H(+). It carries out the reaction 1-octadecanoyl-sn-glycero-3-phosphocholine + H2O = octadecanoate + sn-glycerol 3-phosphocholine + H(+). It catalyses the reaction 1-hexadecanoyl-sn-glycero-3-phosphate + H2O = sn-glycerol 3-phosphate + hexadecanoate + H(+). The catalysed reaction is 1-hexadecanoyl-sn-glycero-3-phospho-L-serine + H2O = sn-glycero-3-phospho-L-serine + hexadecanoate + H(+). Inhibited by compound 1 or (5,5-Dioxido-4H-thieno[3,2-c]thiochromen-2-yl)(4-(4-methoxyphenyl)piperazin-1-yl)methanone. Acts as an acyl-protein thioesterase hydrolyzing fatty acids from S-acylated cysteine residues in proteins such as trimeric G alpha proteins, GSDMD, GAP43, ZDHHC6 or HRAS. Deacylates GAP43. Mediates depalmitoylation of ZDHHC6. Has lysophospholipase activity. Hydrolyzes prostaglandin glycerol esters (PG-Gs) in the following order prostaglandin D2-glycerol ester (PGD2-G) &gt; prostaglandin E2 glycerol ester (PGE2-G) &gt; prostaglandin F2-alpha-glycerol ester (PGF2-alpha-G). Hydrolyzes 1-arachidonoylglycerol but not 2-arachidonoylglycerol or arachidonoylethanolamide. The protein is Acyl-protein thioesterase 2 (LYPLA2) of Homo sapiens (Human).